We begin with the raw amino-acid sequence, 356 residues long: Heparan sulfate 2-O-sulfotransferase 1 (356 aa).

The Cytoplasmic portion of the chain corresponds to 1–11 (MGLLRIMMPPK). A helical; Signal-anchor for type II membrane protein membrane pass occupies residues 12-28 (LQLLAVLTFGVLMLFLE). The stretch at 24 to 51 (MLFLENQIQNLEESREKLERAIARHEVR) forms a coiled coil. Over 29 to 356 (NQIQNLEESR…FYEKIYPKSN (328 aa)) the chain is Lumenal. Adenosine 3',5'-bisphosphate contacts are provided by Lys-83, Thr-84, Ala-85, Ser-86, Thr-87, and Ser-88. Residues Asn-108 and Asn-127 are each glycosylated (N-linked (GlcNAc...) asparagine). Active-site residues include His-140 and His-142. Adenosine 3',5'-bisphosphate contacts are provided by Arg-164 and Ser-172. Cystine bridges form between Cys-201–Cys-209 and Cys-222–Cys-228. Adenosine 3',5'-bisphosphate-binding residues include Tyr-279, Ser-285, Thr-290, and Lys-293.

The protein belongs to the sulfotransferase 3 family. In terms of assembly, homotrimer.

Its subcellular location is the golgi apparatus membrane. Catalyzes the transfer of a sulfo group from 3'-phospho-5'-adenylyl sulfate (PAPS) to the 2-OH position of iduronic acid (IdoA) or glucuronic acid (GlcA) within the heparan sulfate (HS) chain and participates in HS biosynthesis. The chain is Heparan sulfate 2-O-sulfotransferase 1 from Xenopus laevis (African clawed frog).